The primary structure comprises 439 residues: Probable E3 ubiquitin-protein ligase makorin-1 (439 aa).

3 C3H1-type zinc fingers span residues 18-45 (WTKH…HDLS), 48-74 (KQTM…HTKP), and 163-190 (EMKK…HGDV). The interval 73 to 118 (KPSKQDEVPSSKPSMPLTAAPLAGTPEPVSDGPGGTTGAQEKPQGS) is disordered. The tract at residues 191 to 218 (CDMCGLQVLHPSDTSQRSQHIRACIEAH) is makorin-type Cys-His. The segment at 236 to 290 (CGVCMEVVFEKTNPSERRFGILSNCCHCYCLKCIRKWRSAKQFESKIIKSCPECR) adopts an RING-type zinc-finger fold. Residues 319–348 (GMGTKPCRYFDEGRGTCPFGANCFYKHAFP) form a C3H1-type 4 zinc finger. The disordered stretch occupies residues 352-371 (LEEPQPQRRQNGSNGRNRNT). The segment covering 358–368 (QRRQNGSNGRN) has biased composition (low complexity).

It catalyses the reaction S-ubiquitinyl-[E2 ubiquitin-conjugating enzyme]-L-cysteine + [acceptor protein]-L-lysine = [E2 ubiquitin-conjugating enzyme]-L-cysteine + N(6)-ubiquitinyl-[acceptor protein]-L-lysine.. Its pathway is protein modification; protein ubiquitination. E3 ubiquitin ligase catalyzing the covalent attachment of ubiquitin moieties onto substrate proteins. The polypeptide is Probable E3 ubiquitin-protein ligase makorin-1 (Danio rerio (Zebrafish)).